A 329-amino-acid chain; its full sequence is Transmembrane protein I329L (329 aa).

The N-terminal stretch at 1-31 (MLRVFIFFVFLGSGLAGRIKPQITCKYFISE) is a signal peptide. Residues Asn-32, Asn-39, Asn-44, Asn-76, Asn-82, and Asn-101 are each glycosylated (N-linked (GlcNAc...) asparagine; by host). Over 32-239 (NNTWYKYNVT…NTERYKNCYP (208 aa)) the chain is Extracellular. One copy of the LRR repeat lies at 112–133 (ELKFLDLRYNNLQFIDYNILRK). N-linked (GlcNAc...) asparagine; by host glycans are attached at residues Asn-185 and Asn-219. The cysteines at positions 195 and 237 are disulfide-linked. The chain crosses the membrane as a helical span at residues 240 to 260 (FVLVSILCSCISFLFLIICLL). Residues 261–329 (RSICKKYSCT…EKKASCSRRK (69 aa)) are Cytoplasmic-facing.

It belongs to the asfivirus I329L family. Highly glycosylated.

The protein localises to the host endoplasmic reticulum membrane. Its subcellular location is the host Golgi apparatus membrane. In terms of biological role, viral TLR3 homolog that probably prevents TLR3 dimerization and subsequent induction of IFN. Inhibits dsRNA-stimulated activation of NF-kB and IRF3. The protein is Transmembrane protein I329L of Ornithodoros (relapsing fever ticks).